The primary structure comprises 224 residues: uncharacterized protein (224 aa).

The span at 44-139 (TSPPIVPLPT…PSPPPSPSPL (96 aa)) shows a compositional bias: pro residues. The segment at 44-145 (TSPPIVPLPT…PSPLGEPMYY (102 aa)) is disordered.

This is an uncharacterized protein from Lepidoptera (butterflies and moths).